The following is a 337-amino-acid chain: Monoacylglycerol lipase abhd6-A (337 aa).

The Extracellular segment spans residues methionine 1 to proline 19. Residues isoleucine 20–tryptophan 42 traverse the membrane as a helical; Signal-anchor for type II membrane protein segment. Residues arginine 43 to glutamate 337 lie on the Cytoplasmic side of the membrane. Positions serine 73–proline 313 constitute an AB hydrolase-1 domain. Residue serine 148 is the Nucleophile of the active site. Residues aspartate 278 and histidine 306 each act as charge relay system in the active site.

This sequence belongs to the AB hydrolase superfamily.

It is found in the late endosome membrane. The protein resides in the lysosome membrane. Its subcellular location is the mitochondrion membrane. It catalyses the reaction Hydrolyzes glycerol monoesters of long-chain fatty acids.. The enzyme catalyses 1-octanoylglycerol + H2O = octanoate + glycerol + H(+). It carries out the reaction 1-decanoylglycerol + H2O = decanoate + glycerol + H(+). The catalysed reaction is 1-dodecanoylglycerol + H2O = dodecanoate + glycerol + H(+). It catalyses the reaction 1-tetradecanoylglycerol + H2O = tetradecanoate + glycerol + H(+). The enzyme catalyses 2-hexadecanoylglycerol + H2O = glycerol + hexadecanoate + H(+). It carries out the reaction 2-(9Z-octadecenoyl)-glycerol + H2O = glycerol + (9Z)-octadecenoate + H(+). The catalysed reaction is 1-(9Z-octadecenoyl)-glycerol + H2O = glycerol + (9Z)-octadecenoate + H(+). It catalyses the reaction 2-(9Z,12Z-octadecadienoyl)-glycerol + H2O = (9Z,12Z)-octadecadienoate + glycerol + H(+). The enzyme catalyses 2-(5Z,8Z,11Z,14Z-eicosatetraenoyl)-glycerol + H2O = glycerol + (5Z,8Z,11Z,14Z)-eicosatetraenoate + H(+). It carries out the reaction 1-(5Z,8Z,11Z,14Z-eicosatetraenoyl)-glycerol + H2O = glycerol + (5Z,8Z,11Z,14Z)-eicosatetraenoate + H(+). The catalysed reaction is 1-(9Z,12Z-octadecadienoyl)-glycerol + H2O = (9Z,12Z)-octadecadienoate + glycerol + H(+). It catalyses the reaction 3-(9Z-octadecenoyl)-sn-glycero-1-phospho-(3'-(9Z-octadecenoyl)-1'-sn-glycerol) + H2O = 3-(9Z-octadecenoyl)-sn-glycero-1-phospho-(1'-sn-glycerol) + (9Z)-octadecenoate + H(+). The enzyme catalyses (S,S)-2-(9Z-octadecenoyl)-sn-glycero-1-phospho-(2'-(9Z-octadecenoyl)-1'-sn-glycerol) + H2O = (S,S)-2-(9Z-octadecenoyl)-sn-glycero-1-phospho-(1'-sn-glycerol) + (9Z)-octadecenoate + H(+). It carries out the reaction (R,R)-2-(9Z-octadecenoyl)-sn-glycero-3-phospho-(2'-(9Z-octadecenoyl)-3'-sn-glycerol) + H2O = (R,R)-2-(9Z-octadecenoyl)-sn-glycero-3-phospho-(3'-sn-glycerol) + (9Z)-octadecenoate + H(+). Its function is as follows. Lipase that preferentially hydrolysis medium-chain saturated monoacylglycerols including 2-arachidonoylglycerol. Through 2-arachidonoylglycerol degradation may regulate endocannabinoid signaling pathways. Also has a lysophosphatidyl lipase activity with a preference for lysophosphatidylglycerol among other lysophospholipids. Also able to degrade bis(monoacylglycero)phosphate (BMP) and constitutes the major enzyme for BMP catabolism. BMP, also known as lysobisphosphatidic acid, is enriched in late endosomes and lysosomes and plays a key role in the formation of intraluminal vesicles and in lipid sorting. This chain is Monoacylglycerol lipase abhd6-A (abhd6-a), found in Xenopus laevis (African clawed frog).